The primary structure comprises 197 residues: Ribonuclease HII (197 aa).

In terms of domain architecture, RNase H type-2 spans 7 to 197; it reads LGIAGVDEVG…SFLRKLFATV (191 aa). Residues D13, E14, and D109 each contribute to the a divalent metal cation site.

It belongs to the RNase HII family. Mn(2+) is required as a cofactor. Requires Mg(2+) as cofactor.

The protein localises to the cytoplasm. The enzyme catalyses Endonucleolytic cleavage to 5'-phosphomonoester.. In terms of biological role, endonuclease that specifically degrades the RNA of RNA-DNA hybrids. This Synechococcus sp. (strain CC9311) protein is Ribonuclease HII.